We begin with the raw amino-acid sequence, 476 residues long: Probable cytosolic Fe-S cluster assembly factor GJ13047 (476 aa).

Cys-23, Cys-68, Cys-71, Cys-74, Cys-187, Cys-243, Cys-395, and Cys-399 together coordinate [4Fe-4S] cluster.

This sequence belongs to the NARF family.

Component of the cytosolic iron-sulfur (Fe/S) protein assembly machinery. Required for maturation of extramitochondrial Fe/S proteins. The protein is Probable cytosolic Fe-S cluster assembly factor GJ13047 of Drosophila virilis (Fruit fly).